Here is a 292-residue protein sequence, read N- to C-terminus: Glycine--tRNA ligase alpha subunit (292 aa).

The protein belongs to the class-II aminoacyl-tRNA synthetase family. In terms of assembly, tetramer of two alpha and two beta subunits.

It localises to the cytoplasm. The enzyme catalyses tRNA(Gly) + glycine + ATP = glycyl-tRNA(Gly) + AMP + diphosphate. This chain is Glycine--tRNA ligase alpha subunit, found in Clostridioides difficile (strain 630) (Peptoclostridium difficile).